A 328-amino-acid chain; its full sequence is Diacetylchitobiose uptake system permease protein DasB (328 aa).

The interval 1-27 is disordered; that stretch reads MTVQTERPPSGPSDVRKADGGGTGGTR. Helical transmembrane passes span 36–56, 104–124, 134–154, 188–208, 247–267, and 297–317; these read ALAPYLLLLPAAAATVLLLGW, IIFTAVNVVLTMVVGGLIGLL, FVLMIGLVLAWAMPVVAATTV, FSTFFVVTVLIVWMSVPFVAI, FLYATTFLEVIWIFKAFVQVY, and MGAAIAVLTILILLGLTAYYL. Positions 100–316 constitute an ABC transmembrane type-1 domain; it reads TVRSIIFTAV…LILLGLTAYY (217 aa).

The protein belongs to the binding-protein-dependent transport system permease family. The complex is composed of two ATP-binding proteins (MsiK), two transmembrane proteins (DasB and DasC) and a solute-binding protein (DasA).

The protein localises to the cell membrane. Functionally, part of the ABC transporter complex DasABC-MsiK involved in N,N'-diacetylchitobiose ((GlcNAc)2) uptake. Responsible for the translocation of the substrate across the membrane. The chain is Diacetylchitobiose uptake system permease protein DasB from Streptomyces coelicolor (strain ATCC BAA-471 / A3(2) / M145).